The sequence spans 191 residues: UPF0398 protein LSEI_1479 (191 aa).

It belongs to the UPF0398 family.

The sequence is that of UPF0398 protein LSEI_1479 from Lacticaseibacillus paracasei (strain ATCC 334 / BCRC 17002 / CCUG 31169 / CIP 107868 / KCTC 3260 / NRRL B-441) (Lactobacillus paracasei).